Reading from the N-terminus, the 195-residue chain is MALDTPLSRAPAIAPEPKGILDPATGLPIGATDPTFLSINDELADRGFLLTTADDLITWARTGSLMWMTFGLACCAVEMMQMSMPRYDAERFGFAPRASPRQSDVMIVAGTLTNKMAPALRKVYDQMPEPRYVISMGSCANGGGYYHYSYSVVRGCDRVVPVDIYVPGCPPSAEALLYGVLLLQKKIRRTGTIER.

Residues cysteine 74, cysteine 75, cysteine 139, and cysteine 169 each contribute to the [4Fe-4S] cluster site.

It belongs to the complex I 20 kDa subunit family. As to quaternary structure, NDH-1 is composed of 14 different subunits. Subunits NuoB, C, D, E, F, and G constitute the peripheral sector of the complex. Requires [4Fe-4S] cluster as cofactor.

The protein resides in the cell inner membrane. It carries out the reaction a quinone + NADH + 5 H(+)(in) = a quinol + NAD(+) + 4 H(+)(out). NDH-1 shuttles electrons from NADH, via FMN and iron-sulfur (Fe-S) centers, to quinones in the respiratory chain. The immediate electron acceptor for the enzyme in this species is believed to be ubiquinone. Couples the redox reaction to proton translocation (for every two electrons transferred, four hydrogen ions are translocated across the cytoplasmic membrane), and thus conserves the redox energy in a proton gradient. In Methylobacterium sp. (strain 4-46), this protein is NADH-quinone oxidoreductase subunit B.